We begin with the raw amino-acid sequence, 618 residues long: Indolepyruvate oxidoreductase subunit IorA (618 aa).

2 4Fe-4S ferredoxin-type domains span residues 559–590 (RPVRVDEEKCDLCLECLNELACPAIVEEDGRV) and 588–617 (GRVFIDPLYCRGCTICLQICPAGAIKPEGK). Residues Cys-568, Cys-571, Cys-574, Cys-580, Cys-597, Cys-600, Cys-603, and Cys-607 each coordinate [4Fe-4S] cluster.

As to quaternary structure, heterodimer of the IorA and IorB subunits. It depends on [4Fe-4S] cluster as a cofactor.

It catalyses the reaction indole-3-pyruvate + 2 oxidized [2Fe-2S]-[ferredoxin] + CoA = (indol-3-yl)acetyl-CoA + 2 reduced [2Fe-2S]-[ferredoxin] + CO2 + H(+). In terms of biological role, catalyzes the ferredoxin-dependent oxidative decarboxylation of arylpyruvates. In Methanothermobacter marburgensis (strain ATCC BAA-927 / DSM 2133 / JCM 14651 / NBRC 100331 / OCM 82 / Marburg) (Methanobacterium thermoautotrophicum), this protein is Indolepyruvate oxidoreductase subunit IorA (iorA).